The sequence spans 351 residues: Fe(3+) ions import ATP-binding protein FbpC (351 aa).

The region spanning 9–239 is the ABC transporter domain; the sequence is LVLKNINKTF…PNSLFLANFM (231 aa). 41–48 is a binding site for ATP; the sequence is GPSGCGKT.

It belongs to the ABC transporter superfamily. Fe(3+) ion importer (TC 3.A.1.10) family. The complex is composed of two ATP-binding proteins (FbpC), two transmembrane proteins (FbpB) and a solute-binding protein (FbpA).

It localises to the cell inner membrane. It catalyses the reaction Fe(3+)(out) + ATP + H2O = Fe(3+)(in) + ADP + phosphate + H(+). In terms of biological role, part of the ABC transporter complex FbpABC involved in Fe(3+) ions import. Responsible for energy coupling to the transport system. The polypeptide is Fe(3+) ions import ATP-binding protein FbpC (Mannheimia succiniciproducens (strain KCTC 0769BP / MBEL55E)).